The chain runs to 205 residues: Putative 3-methyladenine DNA glycosylase (205 aa).

This sequence belongs to the DNA glycosylase MPG family.

The protein is Putative 3-methyladenine DNA glycosylase of Bacillus thuringiensis (strain Al Hakam).